The primary structure comprises 685 residues: Serine/threonine-protein kinase PLK2 (685 aa).

The disordered stretch occupies residues 24-71; that stretch reads KGCGADSKKKRPPQPPEESQPPQSQAQVPPAAAHHHHHHSHSGPEISR. Over residues 43–55 the composition is skewed to low complexity; it reads QPPQSQAQVPPAA. One can recognise a Protein kinase domain in the interval 82–334; the sequence is YCRGKVLGKG…LDDIIRHDFF (253 aa). Residues 88-96 and lysine 111 contribute to the ATP site; that span reads LGKGGFAKC. Aspartate 205 functions as the Proton acceptor in the catalytic mechanism. Threonine 239 bears the Phosphothreonine mark. The tract at residues 406 to 433 is disordered; that stretch reads SITQQPSKHRTDEELQPPTTTVARSGTP. 2 POLO box domains span residues 503–581 and 601–685; these read WVTK…YMEE and YLLQ…QRCN.

Belongs to the protein kinase superfamily. Ser/Thr protein kinase family. CDC5/Polo subfamily. In terms of assembly, interacts with NSF; causing NSF dissociation from GRIA2. Interacts with CIB1. In terms of processing, catalytic activity is enhanced by phosphorylation of Thr-239.

It localises to the cytoplasm. The protein resides in the cytoskeleton. Its subcellular location is the microtubule organizing center. It is found in the centrosome. The protein localises to the centriole. It localises to the cell projection. The protein resides in the dendrite. It catalyses the reaction L-seryl-[protein] + ATP = O-phospho-L-seryl-[protein] + ADP + H(+). The enzyme catalyses L-threonyl-[protein] + ATP = O-phospho-L-threonyl-[protein] + ADP + H(+). With respect to regulation, activated by phosphorylation of Thr-239. Once activated, activity is stimulated by binding target proteins. Functionally, tumor suppressor serine/threonine-protein kinase involved in synaptic plasticity, centriole duplication and G1/S phase transition. Polo-like kinases act by binding and phosphorylating proteins that are already phosphorylated on a specific motif recognized by the POLO box domains. Phosphorylates CPAP, NPM1, RAPGEF2, RASGRF1, SNCA, SIPA1L1 and SYNGAP1. Plays a key role in synaptic plasticity and memory by regulating the Ras and Rap protein signaling: required for overactivity-dependent spine remodeling by phosphorylating the Ras activator RASGRF1 and the Rap inhibitor SIPA1L1 leading to their degradation by the proteasome. Conversely, phosphorylates the Rap activator RAPGEF2 and the Ras inhibitor SYNGAP1, promoting their activity. Also regulates synaptic plasticity independently of kinase activity, via its interaction with NSF that disrupts the interaction between NSF and the GRIA2 subunit of AMPARs, leading to a rapid rundown of AMPAR-mediated current that occludes long term depression. Required for procentriole formation and centriole duplication by phosphorylating CPAP and NPM1, respectively. Its induction by p53/TP53 suggests that it may participate in the mitotic checkpoint following stress. The chain is Serine/threonine-protein kinase PLK2 (PLK2) from Pongo abelii (Sumatran orangutan).